The sequence spans 342 residues: HPr kinase/phosphorylase (342 aa).

Catalysis depends on residues histidine 153 and lysine 174. 168 to 175 (GKSGLGKS) is a binding site for ATP. Residue serine 175 coordinates Mg(2+). Aspartate 192 serves as the catalytic Proton acceptor; for phosphorylation activity. Proton donor; for dephosphorylation activity. Residues 217 to 226 (MEIRGLGVVD) are important for the catalytic mechanism of both phosphorylation and dephosphorylation. Glutamate 218 serves as a coordination point for Mg(2+). Arginine 259 is an active-site residue. The tract at residues 280-285 (PIFPGK) is important for the catalytic mechanism of dephosphorylation.

The protein belongs to the HPrK/P family. In terms of assembly, homohexamer. Mg(2+) is required as a cofactor.

It carries out the reaction [HPr protein]-L-serine + ATP = [HPr protein]-O-phospho-L-serine + ADP + H(+). The enzyme catalyses [HPr protein]-O-phospho-L-serine + phosphate + H(+) = [HPr protein]-L-serine + diphosphate. Catalyzes the ATP- as well as the pyrophosphate-dependent phosphorylation of a specific serine residue in HPr, a phosphocarrier protein of the phosphoenolpyruvate-dependent sugar phosphotransferase system (PTS). HprK/P also catalyzes the pyrophosphate-producing, inorganic phosphate-dependent dephosphorylation (phosphorolysis) of seryl-phosphorylated HPr (P-Ser-HPr). In Chlorobaculum tepidum (strain ATCC 49652 / DSM 12025 / NBRC 103806 / TLS) (Chlorobium tepidum), this protein is HPr kinase/phosphorylase.